A 154-amino-acid chain; its full sequence is Large ribosomal subunit protein uL13 (154 aa).

It belongs to the universal ribosomal protein uL13 family. Part of the 50S ribosomal subunit.

Functionally, this protein is one of the early assembly proteins of the 50S ribosomal subunit, although it is not seen to bind rRNA by itself. It is important during the early stages of 50S assembly. The protein is Large ribosomal subunit protein uL13 of Bartonella quintana (strain Toulouse) (Rochalimaea quintana).